A 455-amino-acid polypeptide reads, in one-letter code: GTPase Der (455 aa).

EngA-type G domains lie at 4 to 169 and 178 to 353; these read PVVA…PPKD and IQLS…EQHR. GTP-binding positions include 10–17, 57–61, 120–123, 184–191, 231–235, and 296–299; these read GRPNVGKS, DTGGL, NKCE, DTAGI, and NKWD. Residues 354-439 enclose the KH-like domain; the sequence is RRVSTSVVNE…PVKLFWRGKQ (86 aa).

It belongs to the TRAFAC class TrmE-Era-EngA-EngB-Septin-like GTPase superfamily. EngA (Der) GTPase family. Associates with the 50S ribosomal subunit.

Its function is as follows. GTPase that plays an essential role in the late steps of ribosome biogenesis. The polypeptide is GTPase Der (Synechococcus sp. (strain CC9311)).